Here is a 109-residue protein sequence, read N- to C-terminus: Probable glutaredoxin slr1562 (109 aa).

Residues 11–109 enclose the Glutaredoxin domain; the sequence is LSGRQADGIK…PLLATPPNPA (99 aa). Cys31 and Cys34 are joined by a disulfide.

The protein belongs to the glutaredoxin family.

Functionally, has a glutathione-disulfide oxidoreductase activity in the presence of NADPH and glutathione reductase. Reduces low molecular weight disulfides and proteins. The sequence is that of Probable glutaredoxin slr1562 from Synechocystis sp. (strain ATCC 27184 / PCC 6803 / Kazusa).